The following is an 89-amino-acid chain: Small ribosomal subunit protein uS15 (89 aa).

The protein belongs to the universal ribosomal protein uS15 family. Part of the 30S ribosomal subunit. Forms a bridge to the 50S subunit in the 70S ribosome, contacting the 23S rRNA.

Its function is as follows. One of the primary rRNA binding proteins, it binds directly to 16S rRNA where it helps nucleate assembly of the platform of the 30S subunit by binding and bridging several RNA helices of the 16S rRNA. Forms an intersubunit bridge (bridge B4) with the 23S rRNA of the 50S subunit in the ribosome. In Staphylococcus epidermidis (strain ATCC 12228 / FDA PCI 1200), this protein is Small ribosomal subunit protein uS15.